A 1342-amino-acid chain; its full sequence is Subtilisin-like protease 2 (1342 aa).

An N-terminal signal peptide occupies residues 1-18 (MLNIIYVVSLILIKFIFY). A propeptide spans 19–687 (KECNNNNNYY…KLYNNKYSFL (669 aa)) (inhibition peptide). Disordered regions lie at residues 85 to 111 (EKKT…ENEI) and 143 to 171 (ADVS…NYKN). Asn-165, Asn-343, Asn-451, Asn-455, and Asn-493 each carry an N-linked (GlcNAc...) asparagine glycan. A disordered region spans residues 415 to 474 (KKSKKEKENTQQKGGNNPNVDINILNNNNNNNNNNNNNSNNNSNSMNDEEINYNNNNNKE). Positions 430–474 (NNPNVDINILNNNNNNNNNNNNNSNNNSNSMNDEEINYNNNNNKE) are enriched in low complexity. The tract at residues 500–531 (IYHNKNDNSYKNKKEGTGKNNDNNDPNNNNNK) is disordered. Over residues 503-516 (NKNDNSYKNKKEGT) the composition is skewed to basic and acidic residues. Residues 518–531 (KNNDNNDPNNNNNK) show a composition bias toward low complexity. N-linked (GlcNAc...) asparagine glycosylation is found at Asn-551, Asn-642, and Asn-729. At 688 to 1137 (NKFLNIEPLI…LYNLYEYDSH (450 aa)) the chain is on the extracellular side. Residues 727–1020 (TWNLSIIRVF…DSLVNAEGAV (294 aa)) enclose the Peptidase S8 domain. Active-site charge relay system residues include Asp-755 and His-798. Asn-821, Asn-857, Asn-893, and Asn-951 each carry an N-linked (GlcNAc...) asparagine glycan. The Charge relay system role is filled by Ser-961. N-linked (GlcNAc...) asparagine glycans are attached at residues Asn-1010 and Asn-1106. A helical membrane pass occupies residues 1138–1158 (YLLASVILFFLALLSIFVGMI). The Cytoplasmic segment spans residues 1159–1342 (YMKSRKHSDK…MNQLDDMFMK (184 aa)).

This sequence belongs to the peptidase S8 family. Post-translationally, proteolytically cleaved at the N-terminus to generate a 74kDa intermediate which is further processed into a 72kDa form. The first maturation cleavage is autocatalytic, occurs in the ER and is necessary for the subsequent SUB2 trafficking to the microneme. The second cleavage may be mediated by PMX/plasmepsin X.

It is found in the cell membrane. It localises to the cytoplasmic vesicle. Its subcellular location is the secretory vesicle. The protein localises to the microneme membrane. The catalysed reaction is Hydrolysis of proteins with broad specificity for peptide bonds, and a preference for a large uncharged residue in P1. Hydrolyzes peptide amides.. Activation may be calcium-dependent. Inhibited by the non-covalent interaction with the cleaved propeptide. Its function is as follows. Serine protease which plays an essential role in the shedding of AMA1, MSP1 and MSP7 from the surface of the invading merozoite; this step is essential for productive invasion and the release of the adhesion between the erythrocyte and the merozoite. May cleave TRAMP/PTTRAMP, thereby shedding TRAMP from the merozoite surface during erythrocyte invasion. The protein is Subtilisin-like protease 2 of Plasmodium falciparum.